We begin with the raw amino-acid sequence, 262 residues long: MDGCGTYLDTMRREAPLVQCITNFVAMNVVANVLLAAGASPAMVHDAEESGEFAAIAQALTINMGTPSPRWVEGMEAAARGAAAAGRPWVLDPVAVGATAFRRGLGARLLALKPTVIRGNASEILALAGAETRGKGADSADPVAAAEAAAQRLAESSGAVVAVTGPVDFVTDGRRGIRCANGHPLMPRVTALGCSLTGIVGAFAATRPPFEATAAALAFFGLAGEEAAKTATGPGSFQVAFLDALHTLSPEALDRGARLEAA.

M43 contacts substrate. The ATP site is built by R118 and T164. Position 191 (A191) interacts with substrate.

Belongs to the Thz kinase family. Requires Mg(2+) as cofactor.

It carries out the reaction 5-(2-hydroxyethyl)-4-methylthiazole + ATP = 4-methyl-5-(2-phosphooxyethyl)-thiazole + ADP + H(+). Its pathway is cofactor biosynthesis; thiamine diphosphate biosynthesis; 4-methyl-5-(2-phosphoethyl)-thiazole from 5-(2-hydroxyethyl)-4-methylthiazole: step 1/1. In terms of biological role, catalyzes the phosphorylation of the hydroxyl group of 4-methyl-5-beta-hydroxyethylthiazole (THZ). The polypeptide is Hydroxyethylthiazole kinase (Cereibacter sphaeroides (strain ATCC 17023 / DSM 158 / JCM 6121 / CCUG 31486 / LMG 2827 / NBRC 12203 / NCIMB 8253 / ATH 2.4.1.) (Rhodobacter sphaeroides)).